The following is a 500-amino-acid chain: L-arabinose isomerase (500 aa).

The Mn(2+) site is built by Glu306, Glu333, His350, and His450.

Belongs to the arabinose isomerase family. In terms of assembly, homohexamer. The cofactor is Mn(2+).

It carries out the reaction beta-L-arabinopyranose = L-ribulose. The protein operates within carbohydrate degradation; L-arabinose degradation via L-ribulose; D-xylulose 5-phosphate from L-arabinose (bacterial route): step 1/3. Its function is as follows. Catalyzes the conversion of L-arabinose to L-ribulose. The protein is L-arabinose isomerase of Klebsiella pneumoniae (strain 342).